The chain runs to 1261 residues: Autism susceptibility gene 2 protein homolog (1261 aa).

Disordered stretches follow at residues 1–88 (MDGP…EDII), 105–236 (DVAV…DASS), 251–486 (LGVG…AGST), 505–545 (QSAD…FTPF), 771–1023 (NSVF…PLAS), and 1121–1148 (REPHDYSHHHHHHHHPLAVDPRREHERG). A compositionally biased stretch (basic residues) spans 8 to 17 (HGLRKKRRSR). A compositionally biased stretch (gly residues) spans 30–40 (LGTGAAGGIGA). Residues 105–118 (DVAVKPQERAEKRQ) are compositionally biased toward basic and acidic residues. The segment covering 136-147 (HSKKSRLSHSHH) has biased composition (basic residues). The span at 148–158 (YSSDRENDRNL) shows a compositional bias: basic and acidic residues. The span at 177–192 (PGQNSCRDSDSESASG) shows a compositional bias: polar residues. Residues 275 to 298 (RSQEKSQDCCKEPVFEPVVLKDPH) are compositionally biased toward basic and acidic residues. Residues 288-471 (VFEPVVLKDP…PTALPPPPPL (184 aa)) form an important for regulation of lamellipodia formation region. 2 stretches are compositionally biased toward low complexity: residues 301–315 (LPQLPSQAQAEPQLQ) and 339–409 (QPAQ…SRSS). Polar residues predominate over residues 435 to 446 (PNHSPLHSFTPT). The span at 526 to 539 (HQHQHQHTHQHTHQ) shows a compositional bias: basic residues. Pro residues predominate over residues 800–809 (PSFPTPPPWL). Over residues 812–849 (GELERSASAAAHDRDRDVDKRDSSVSKDDKERESVEKR) the composition is skewed to basic and acidic residues. The segment covering 868-879 (NRSSTDPTTRGH) has biased composition (polar residues). 2 stretches are compositionally biased toward basic and acidic residues: residues 880 to 935 (LNTE…EPKQ) and 960 to 993 (REAEPRKGEPAYENPKKNAEVKVKEERKEDHDLP). A compositionally biased stretch (basic residues) spans 1127-1136 (SHHHHHHHHP). Phosphoserine is present on residues S1200 and S1235. The disordered stretch occupies residues 1201–1261 (PTAGHQNGLL…SHTLKDIEAR (61 aa)). Basic and acidic residues predominate over residues 1245–1261 (EIRERPPSHTLKDIEAR).

The protein belongs to the AUTS2 family. As to quaternary structure, component of a PRC1-like complex that contains PCGF5, RNF2, CSNK2B, RYBP and AUTS2. Within this complex, interacts directly with PCGF5 and CSNK2B. Interacts with the histone acetyltransferase EP300/p300. Interacts (via Pro-rich region) with PREX1, DOCK1 and ELMO2. As to expression, detected in brain cortex in embryo, neonates and adults (at protein level). Detected in embryonic and adult Purkinje cells in the cerebellum. Detected in dorsal thalamus and in dopaminergic neurons in substantia nigra.

It is found in the nucleus. The protein resides in the cytoplasm. It localises to the cytoskeleton. The protein localises to the cell projection. Its subcellular location is the growth cone. In terms of biological role, component of a Polycomb group (PcG) multiprotein PRC1-like complex, a complex class required to maintain the transcriptionally repressive state of many genes, including Hox genes, throughout development. PcG PRC1 complex acts via chromatin remodeling and modification of histones; it mediates monoubiquitination of histone H2A 'Lys-119', rendering chromatin heritably changed in its expressibility. The PRC1-like complex that contains PCGF5, RNF2, CSNK2B, RYBP and AUTS2 has decreased histone H2A ubiquitination activity, due to the phosphorylation of RNF2 by CSNK2B. As a consequence, the complex mediates transcriptional activation. In the cytoplasm, plays a role in axon and dendrite elongation and in neuronal migration during embryonic brain development. Promotes reorganization of the actin cytoskeleton, lamellipodia formation and neurite elongation via its interaction with RAC guanine nucleotide exchange factors, which then leads to the activation of RAC1. This is Autism susceptibility gene 2 protein homolog (Auts2) from Mus musculus (Mouse).